The primary structure comprises 110 residues: Endoribonuclease SymE (110 aa).

The region spanning 29–74 is the SpoVT-AbrB domain; that stretch reads SRYPDYTRIPALTMKGQWLEAAGFATGTEVDVRVMNGCIVLTAQQP.

Belongs to the SymE family.

The protein resides in the cytoplasm. Functionally, involved in the degradation and recycling of damaged RNA. It is itself a target for degradation by the ATP-dependent protease Lon. The sequence is that of Endoribonuclease SymE from Salmonella heidelberg (strain SL476).